A 186-amino-acid polypeptide reads, in one-letter code: Mitochondrial import inner membrane translocase subunit Tim22 (186 aa).

Cystine bridges form between cysteine 61-cysteine 133 and cysteine 152-cysteine 171. A run of 3 helical transmembrane segments spans residues 66–86 (ALACVGGFVLGGAFGVFTAGI), 117–135 (YAKNFAIVGAMFSCTECLV), and 162–182 (AGLKAGALGCGGFAAFSAVID).

This sequence belongs to the Tim17/Tim22/Tim23 family. As to quaternary structure, core component of the TIM22 complex.

The protein localises to the mitochondrion inner membrane. In terms of biological role, essential core component of the TIM22 complex, a complex that mediates the import and insertion of multi-pass transmembrane proteins into the mitochondrial inner membrane. In the TIM22 complex, it constitutes the voltage-activated and signal-gated channel. Forms a twin-pore translocase that uses the membrane potential as external driving force in 2 voltage-dependent steps. The protein is Mitochondrial import inner membrane translocase subunit Tim22 (timm22) of Xenopus tropicalis (Western clawed frog).